We begin with the raw amino-acid sequence, 101 residues long: Small ribosomal subunit protein uS14 (101 aa).

This sequence belongs to the universal ribosomal protein uS14 family. In terms of assembly, part of the 30S ribosomal subunit. Contacts proteins S3 and S10.

Functionally, binds 16S rRNA, required for the assembly of 30S particles and may also be responsible for determining the conformation of the 16S rRNA at the A site. The chain is Small ribosomal subunit protein uS14 from Neorickettsia sennetsu (strain ATCC VR-367 / Miyayama) (Ehrlichia sennetsu).